The sequence spans 360 residues: Uroporphyrinogen decarboxylase (360 aa).

Residues 31 to 35 (RQAGR), aspartate 81, tyrosine 157, threonine 212, and histidine 333 each bind substrate.

The protein belongs to the uroporphyrinogen decarboxylase family. Homodimer.

The protein localises to the cytoplasm. The enzyme catalyses uroporphyrinogen III + 4 H(+) = coproporphyrinogen III + 4 CO2. Its pathway is porphyrin-containing compound metabolism; protoporphyrin-IX biosynthesis; coproporphyrinogen-III from 5-aminolevulinate: step 4/4. In terms of biological role, catalyzes the decarboxylation of four acetate groups of uroporphyrinogen-III to yield coproporphyrinogen-III. The chain is Uroporphyrinogen decarboxylase from Herminiimonas arsenicoxydans.